The primary structure comprises 110 residues: U1-lycotoxin-Ls1ee (110 aa).

Positions 1–20 are cleaved as a signal peptide; that stretch reads MKFVLLFGVLLVTLFSYSSA. Residues 21–44 constitute a propeptide that is removed on maturation; that stretch reads EMLDDFDQADEDELLSLIEKEEAR. 4 disulfide bridges follow: Cys47–Cys62, Cys54–Cys71, Cys61–Cys89, and Cys73–Cys87.

This sequence belongs to the neurotoxin 19 (CSTX) family. 03 subfamily. Expressed by the venom gland.

It localises to the secreted. In Lycosa singoriensis (Wolf spider), this protein is U1-lycotoxin-Ls1ee.